A 265-amino-acid polypeptide reads, in one-letter code: Glutamate racemase (265 aa).

Residues 12–13 (DS) and 44–45 (YG) contribute to the substrate site. C75 serves as the catalytic Proton donor/acceptor. 76-77 (NT) contacts substrate. Catalysis depends on C186, which acts as the Proton donor/acceptor. 187 to 188 (TH) serves as a coordination point for substrate.

Belongs to the aspartate/glutamate racemases family.

It carries out the reaction L-glutamate = D-glutamate. It functions in the pathway cell wall biogenesis; peptidoglycan biosynthesis. Provides the (R)-glutamate required for cell wall biosynthesis. This chain is Glutamate racemase, found in Pseudomonas putida (strain ATCC 700007 / DSM 6899 / JCM 31910 / BCRC 17059 / LMG 24140 / F1).